A 77-amino-acid polypeptide reads, in one-letter code: DNA-directed RNA polymerase subunit epsilon (77 aa).

Belongs to the RNA polymerase subunit epsilon family. In terms of assembly, RNAP is composed of a core of 2 alpha, a beta and a beta' subunit. The core is associated with a delta subunit, and at least one of epsilon or omega. When a sigma factor is associated with the core the holoenzyme is formed, which can initiate transcription.

It catalyses the reaction RNA(n) + a ribonucleoside 5'-triphosphate = RNA(n+1) + diphosphate. A non-essential component of RNA polymerase (RNAP). The polypeptide is DNA-directed RNA polymerase subunit epsilon (Streptococcus pneumoniae (strain P1031)).